A 75-amino-acid chain; its full sequence is Meucin-49 (75 aa).

The signal sequence occupies residues Met1–Ser22.

It belongs to the non-disulfide-bridged peptide (NDBP) superfamily. Long chain multifunctional peptide (group 2) family. In terms of tissue distribution, expressed by the venom gland.

It is found in the secreted. In terms of biological role, insecticidal toxin and antimicrobial peptide with potent activity against both Gram-negative and -positive bacteria, as well as against fungi. Acts by disrupting bacterial membrane integrity. Shows broad-spectrum and highly potent bactericidal activities against the Gram-positive bacteria B.cereus, B.megaterium, B.subtilis, M.luteus, S.aureus, S.epidermidis, S.warneri, S.griseus, S.scabiei, S.mutans, S.salivarius, and S.sanguinis. Also exhibits a wide spectrum of activity against the Gram-negative bacteria A.faecalis, E.coli, P.aeruginosa, P.solanacearum, S.enterica, S.marcescens, and S.maltophilia. Also shows antimicrobial activities against the fungal strains Aspergillus flavus, A.fumigatus, A.nidulans, A.niger, Beauveria bassiana, and Saccharomyces cerevisiae. Its antibiotic activity is potentiated by other antibacterial peptides such as MeuNaTxbeta-4. Also induces cytolysis on mice, lizards and birds erythrocytes. The sequence is that of Meucin-49 from Mesobuthus eupeus (Lesser Asian scorpion).